The chain runs to 963 residues: Spliceosome associated factor 3, U4/U6 recycling protein (963 aa).

Positions 1 to 11 (MATAAATSASE) are enriched in low complexity. Disordered regions lie at residues 1–36 (MATAAATSASEPEAESKAGPKADGEEDEVKAARTRR) and 49–86 (KTMGPGWDQQEEGVSESDGDEYAMASSAESSPGEYEWE). An N-acetylalanine modification is found at alanine 2. The segment at 2–351 (ATAAATSASE…LVPDLWIRYS (350 aa)) is mediates interaction with PRPF3. Phosphoserine occurs at positions 10 and 16. Residues 14 to 23 (AESKAGPKAD) are compositionally biased toward basic and acidic residues. The stretch at 21–46 (KADGEEDEVKAARTRRKVLSRAVAAA) forms a coiled coil. Residues 57-69 (QQEEGVSESDGDE) show a composition bias toward acidic residues. Positions 82–110 (EYEWEYDEEEEKNQLEIERLEEQLSINVY) form a coiled coil. HAT repeat units lie at residues 126 to 158 (GELTKVRMARQKMSEIFPLTEELWLEWLHDEIS), 164 to 195 (LDREHVYDLFEKAVKDYICPNIWLEYGQYSVG), 201 to 237 (GGLEKVRSVFERALSSVGLHMSKGLALWEAYREFESA), 242 to 275 (ARLEKVHSLFRRQLAIPLYDMEATFAEYEEWSED), 324 to 356 (GDPARIQLIFERALVENCLVPDLWIRYSQYLDR), 359 to 391 (KVKDLVLSVHNRAIRNCPWTVALWSRYLLAMER), 394 to 430 (VDHQVISVTFEKALNAGFIQATDYVEIWQAYLDYLRR), and 487 to 520 (NNMQKARELWDSIMTRGNAKYANMWLEYYNLERA). Serine 215 carries the post-translational modification Phosphoserine. The tract at residues 487 to 520 (NNMQKARELWDSIMTRGNAKYANMWLEYYNLERA) is required for interaction with USP4. A necessary and sufficient for U6 snRNA binding region spans residues 537 to 953 (CTSDYPEHVC…AATEAPKMSN (417 aa)). A coiled-coil region spans residues 559–619 (LEDWDIAVQK…ALKKKKKIRG (61 aa)). Residues 600 to 670 (QRKRARAEKK…EVAPGPAGKC (71 aa)) are required for nuclear localization. The Nuclear localization signal signature appears at 601 to 608 (RKRARAEK). Basic and acidic residues predominate over residues 608–619 (KKALKKKKKIRG). Residues 608–712 (KKALKKKKKI…SITVFVSNLP (105 aa)) form a disordered region. Basic residues predominate over residues 620 to 635 (PEKRGADEDDEKEWGD). The segment covering 644–657 (RRRVENSIPAAGET) has biased composition (acidic residues). Serine 650 is subject to Phosphoserine. Phosphothreonine is present on threonine 657. A compositionally biased stretch (basic and acidic residues) spans 695-712 (VLHDSSKDSITVFVSNLP). One can recognise an RRM 1 domain in the interval 704 to 782 (ITVFVSNLPY…RPMFVSPCVD (79 aa)). A phosphoserine mark is found at serine 769, serine 795, and serine 852. Positions 801–878 (HKLFISGLPF…NVIKVAISNP (78 aa)) constitute an RRM 2 domain. Residues 900–909 (PQTYGARGKG) are compositionally biased toward basic and acidic residues. Position 906 is an omega-N-methylarginine (arginine 906).

In terms of assembly, component of the 7SK snRNP complex at least composed of P-TEFb (composed of CDK9 and CCNT1/cyclin-T1), HEXIM1, HEXIM2, BCDIN3, SART3 proteins and 7SK and U6 snRNAs. Interacts with AGO1 and AGO2. Interacts with PRPF3 and USP4; the interaction with PRPF3 is direct and recruits USP4 to its substrate PRPF3. Interacts with USP15; the interaction is direct.

It is found in the nucleus. The protein localises to the nucleoplasm. The protein resides in the cajal body. Its subcellular location is the nucleus speckle. It localises to the cytoplasm. In terms of biological role, U6 snRNP-binding protein that functions as a recycling factor of the splicing machinery. Promotes the initial reassembly of U4 and U6 snRNPs following their ejection from the spliceosome during its maturation. Also binds U6atac snRNPs and may function as a recycling factor for U4atac/U6atac spliceosomal snRNP, an initial step in the assembly of U12-type spliceosomal complex. The U12-type spliceosomal complex plays a role in the splicing of introns with non-canonical splice sites. May also function as a substrate-targeting factor for deubiquitinases like USP4 and USP15. Recruits USP4 to ubiquitinated PRPF3 within the U4/U5/U6 tri-snRNP complex, promoting PRPF3 deubiquitination and thereby regulating the spliceosome U4/U5/U6 tri-snRNP spliceosomal complex disassembly. May also recruit the deubiquitinase USP15 to histone H2B and mediate histone deubiquitination, thereby regulating gene expression and/or DNA repair. May play a role in hematopoiesis probably through transcription regulation of specific genes including MYC. The polypeptide is Spliceosome associated factor 3, U4/U6 recycling protein (Pongo abelii (Sumatran orangutan)).